The primary structure comprises 444 residues: Adenylyltransferase and sulfurtransferase UBA4 (444 aa).

ATP is bound by residues glycine 81, aspartate 102, 109–113 (SNLHR), lysine 126, and 170–171 (DT). 2 residues coordinate Zn(2+): cysteine 212 and cysteine 215. The active-site Glycyl thioester intermediate; for adenylyltransferase activity is the cysteine 229. The Zn(2+) site is built by cysteine 290 and cysteine 293. A Rhodanese domain is found at 343 to 442 (KTKPYVLLDV…YIDEINPSLP (100 aa)). Cysteine 401 functions as the Cysteine persulfide intermediate; for sulfurtransferase activity in the catalytic mechanism.

It in the N-terminal section; belongs to the HesA/MoeB/ThiF family. UBA4 subfamily. It depends on Zn(2+) as a cofactor.

The protein localises to the cytoplasm. The protein resides in the cytosol. It participates in tRNA modification; 5-methoxycarbonylmethyl-2-thiouridine-tRNA biosynthesis. Plays a central role in 2-thiolation of mcm(5)S(2)U at tRNA wobble positions of cytosolic tRNA(Lys), tRNA(Glu) and tRNA(Gln). Acts by mediating the C-terminal thiocarboxylation of sulfur carrier URM1. Its N-terminus first activates URM1 as acyl-adenylate (-COAMP), then the persulfide sulfur on the catalytic cysteine is transferred to URM1 to form thiocarboxylation (-COSH) of its C-terminus. The reaction probably involves hydrogen sulfide that is generated from the persulfide intermediate and that acts as a nucleophile towards URM1. Subsequently, a transient disulfide bond is formed. Does not use thiosulfate as sulfur donor; NFS1 probably acting as a sulfur donor for thiocarboxylation reactions. Prior mcm(5) tRNA modification by the elongator complex is required for 2-thiolation. May also be involved in protein urmylation. The sequence is that of Adenylyltransferase and sulfurtransferase UBA4 from Kluyveromyces lactis (strain ATCC 8585 / CBS 2359 / DSM 70799 / NBRC 1267 / NRRL Y-1140 / WM37) (Yeast).